The following is a 540-amino-acid chain: tRNA-2-methylthio-N(6)-dimethylallyladenosine synthase (540 aa).

The 117-residue stretch at arginine 4–histidine 120 folds into the MTTase N-terminal domain. [4Fe-4S] cluster is bound by residues cysteine 13, cysteine 49, cysteine 83, cysteine 157, cysteine 161, and cysteine 164. In terms of domain architecture, Radical SAM core spans arginine 143 to glutamate 374. The 93-residue stretch at arginine 376 to leucine 468 folds into the TRAM domain. The interval tryptophan 480–arginine 540 is disordered. Low complexity-rich tracts occupy residues alanine 492–proline 502 and glycine 520–alanine 533.

This sequence belongs to the methylthiotransferase family. MiaB subfamily. Monomer. It depends on [4Fe-4S] cluster as a cofactor.

Its subcellular location is the cytoplasm. The enzyme catalyses N(6)-dimethylallyladenosine(37) in tRNA + (sulfur carrier)-SH + AH2 + 2 S-adenosyl-L-methionine = 2-methylsulfanyl-N(6)-dimethylallyladenosine(37) in tRNA + (sulfur carrier)-H + 5'-deoxyadenosine + L-methionine + A + S-adenosyl-L-homocysteine + 2 H(+). In terms of biological role, catalyzes the methylthiolation of N6-(dimethylallyl)adenosine (i(6)A), leading to the formation of 2-methylthio-N6-(dimethylallyl)adenosine (ms(2)i(6)A) at position 37 in tRNAs that read codons beginning with uridine. In Frankia casuarinae (strain DSM 45818 / CECT 9043 / HFP020203 / CcI3), this protein is tRNA-2-methylthio-N(6)-dimethylallyladenosine synthase.